The chain runs to 344 residues: uncharacterized protein (344 aa).

Residues lysine 38 and tyrosine 167 each coordinate NADP(+).

It belongs to the NAD(P)-dependent epimerase/dehydratase family. Dihydroflavonol-4-reductase subfamily.

This is an uncharacterized protein from Saccharomyces cerevisiae (strain ATCC 204508 / S288c) (Baker's yeast).